A 248-amino-acid chain; its full sequence is Pulmonary surfactant-associated protein A (248 aa).

The first 17 residues, 1–17, serve as a signal peptide directing secretion; the sequence is MLLCSLTLMLLWMVASG. The 73-residue stretch at 28 to 100 folds into the Collagen-like domain; the sequence is GSPGIPGTPG…PGERGPPGFP (73 aa). The segment at 29 to 103 is disordered; it reads SPGIPGTPGS…RGPPGFPAYL (75 aa). Basic and acidic residues predominate over residues 42–51; the sequence is PGRDGRDGIK. The segment covering 54–65 has biased composition (pro residues); sequence PGPPGPMGPPGG. Residues 69-82 are compositionally biased toward low complexity; it reads LPGRDGMTGAPGLP. Over residues 84-93 the composition is skewed to basic and acidic residues; the sequence is ERGEKGEPGE. A C-type lectin domain is found at 127–247; that stretch reads LQGSMLEVGE…CLQYRLAICE (121 aa). 2 cysteine pairs are disulfide-bonded: Cys-155/Cys-246 and Cys-224/Cys-238. Asn-207 carries an N-linked (GlcNAc...) asparagine glycan. Residues Glu-215, Arg-217, Asn-234, and Asp-235 each contribute to the Ca(2+) site.

This sequence belongs to the SFTPA family. In terms of assembly, oligomeric complex of 6 set of homotrimers.

It localises to the secreted. The protein localises to the extracellular space. It is found in the extracellular matrix. The protein resides in the surface film. Its function is as follows. In presence of calcium ions, it binds to surfactant phospholipids and contributes to lower the surface tension at the air-liquid interface in the alveoli of the mammalian lung and is essential for normal respiration. Enhances the expression of MYO18A/SP-R210 on alveolar macrophages. The chain is Pulmonary surfactant-associated protein A (SFTPA1) from Ovis aries (Sheep).